Here is a 250-residue protein sequence, read N- to C-terminus: MRVDLNCDLGEAFGNYSFGGDHQIIPLITSANVACGFHAGDENVMNETVKLAKAHNVAVGAHPGLPDLKGFGRRNIDISNDEIYNLMIYQLGALQGFCRIHQVKINHVKPHGALYQMGAKDREIANVIAQAVYDFDPSLVLVGLANSYLISEAKNVGLITASEVFADRRYEDDGQLVSRKESDAVITDTDEALKQVLKMVKENKVISKNNKEVTLQADTICVHGDGEHALLFVSKIREILMKEGIDIQSL.

This sequence belongs to the LamB/PxpA family. Forms a complex composed of PxpA, PxpB and PxpC.

It carries out the reaction 5-oxo-L-proline + ATP + 2 H2O = L-glutamate + ADP + phosphate + H(+). Its function is as follows. Catalyzes the cleavage of 5-oxoproline to form L-glutamate coupled to the hydrolysis of ATP to ADP and inorganic phosphate. The sequence is that of 5-oxoprolinase subunit A from Staphylococcus aureus (strain NCTC 8325 / PS 47).